The primary structure comprises 268 residues: Small ribosomal subunit protein mS43 (268 aa).

The N-terminal 23 residues, 1–23 (MLNTGLRKGLALSPITHLLKRCS), are a transit peptide targeting the mitochondrion.

The protein belongs to the mitochondrion-specific ribosomal protein mS43 family. Component of the mitochondrial small ribosomal subunit (mt-SSU). Mature yeast 74S mitochondrial ribosomes consist of a small (37S) and a large (54S) subunit. The 37S small subunit contains a 15S ribosomal RNA (15S mt-rRNA) and at least 32 different proteins. The 54S large subunit contains a 21S rRNA (21S mt-rRNA) and at least 45 different proteins. mS43 forms a dimer with mS42, building a large protuberance adjacent to the mRNA channel exit in the mt-SSU body.

Its subcellular location is the mitochondrion. Its function is as follows. Component of the mitochondrial ribosome (mitoribosome), a dedicated translation machinery responsible for the synthesis of mitochondrial genome-encoded proteins, including at least some of the essential transmembrane subunits of the mitochondrial respiratory chain. The mitoribosomes are attached to the mitochondrial inner membrane and translation products are cotranslationally integrated into the membrane. The protein is Small ribosomal subunit protein mS43 of Schizosaccharomyces pombe (strain 972 / ATCC 24843) (Fission yeast).